The primary structure comprises 274 residues: Penicillin-insensitive murein endopeptidase (274 aa).

Positions 1 to 19 (MKKTAIALLAWFVSSASLA) are cleaved as a signal peptide. 3 cysteine pairs are disulfide-bonded: Cys-44–Cys-265, Cys-187–Cys-235, and Cys-216–Cys-223. Positions 110, 113, 120, 147, and 150 each coordinate Zn(2+). Residues 225–274 (DQPLPPPGDGCGAELQSWFEPPKPGTTKPEKKTPPPLPPSCQALLDEHVL) form a disordered region.

This sequence belongs to the peptidase M74 family. Dimer. Requires Zn(2+) as cofactor.

It localises to the periplasm. Functionally, murein endopeptidase that cleaves the D-alanyl-meso-2,6-diamino-pimelyl amide bond that connects peptidoglycan strands. Likely plays a role in the removal of murein from the sacculus. This is Penicillin-insensitive murein endopeptidase from Salmonella paratyphi A (strain ATCC 9150 / SARB42).